A 192-amino-acid polypeptide reads, in one-letter code: Protein ORF45 (192 aa).

Plays a role in the expression of ORF41, which itself is required for late gene expression. The polypeptide is Protein ORF45 (Autographa californica nuclear polyhedrosis virus (AcMNPV)).